The following is a 424-amino-acid chain: Putative chloroquine resistance transporter (424 aa).

Residues 1–57 (MKILKKKKKGNQQIVPDERYRELDSHAPNENEIADEAPMSRKILYYLKLVYHEIREN) are Cytoplasmic-facing. The chain crosses the membrane as a helical span at residues 58–78 (ITIYLLIILYLCVCVMNKIMA). The Vacuolar portion of the chain corresponds to 79-89 (KRTLKKIGNYS). Residue Asn87 is glycosylated (N-linked (GlcNAc...) asparagine). A helical transmembrane segment spans residues 90–110 (FVTSETHNTICMVVFFSLYFI). Over 111–124 (FGRRVTSAKERHQN) the chain is Cytoplasmic. Residues 125–145 (FGLQFLLISLLDACSVIIAFI) traverse the membrane as a helical segment. The Vacuolar portion of the chain corresponds to 146 to 153 (GLTRTTGN). A helical transmembrane segment spans residues 154-174 (IQSFVMQLSIPINMFFCFLIL). Residues 175 to 179 (RYRYH) lie on the Cytoplasmic side of the membrane. Residues 180 to 200 (LFNYVGASIIVLTIAIVEFIL) traverse the membrane as a helical segment. Over 201–208 (SFETQEEN) the chain is Vacuolar. The chain crosses the membrane as a helical span at residues 209-229 (SIVFNLVLIASLIPMSFSNMT). The Cytoplasmic segment spans residues 230 to 246 (REIVFKKYKINILRLNA). The helical transmembrane segment at 247-267 (VVSFFQIFTSCLMLPMYTLPF) threads the bilayer. At 268–316 (LKQINLPFSEIGTNIKNGFRCLILGQNTIVENCGLGMAKMCDDCEGAWK) the chain is on the vacuolar side. 2 disulfides stabilise this stretch: Cys288/Cys311 and Cys300/Cys308. A helical transmembrane segment spans residues 317–337 (TFLAYSFFNICDNLITSFIID). Residues 338 to 345 (KFSTMTYT) are Cytoplasmic-facing. The chain crosses the membrane as a helical span at residues 346-366 (IVSCIQGPAIAIAYYFKFLAG). At 367 to 376 (DAVMKPRVLD) the chain is on the vacuolar side. A helical transmembrane segment spans residues 377–397 (FVTLFGYLFGSIIYRVGNIIL). The Cytoplasmic portion of the chain corresponds to 398-424 (EKKKMMEAGNDDDSEGELTNAESIITQ).

It belongs to the CRT-like transporter family.

Its subcellular location is the vacuole membrane. Nutrient transporter. Involved in maintaining the osmotic homeostasis of the digestive vacuole. This chain is Putative chloroquine resistance transporter, found in Plasmodium knowlesi.